The chain runs to 258 residues: MLPGFGATQTVSPFPNPPEYASAYTSDRIDNGSAPPPPHPLTEFKVFGEEYRLEEDVIAPLSTAGVEQYYVDKNNWKAEMKKLNRXIGAFFDLLEVLIRAPDHPARDKKMVDLHTIFINMHHLINEFRPVQARDSVRILQERQIDELTEICDDFREYLAHGREVVEDQFKMITGKLPPPPPPSDLTRVRMQNGALHRLIEVEKETEEDEEMKEDDEEKPSTSSSEGNQKTLRDMTKGHGPPSVVNLLARQLNEMELKK.

Disordered stretches follow at residues 1–39 (MLPG…PPPH) and 202–243 (EKET…PPSV). Residues 203-217 (KETEEDEEMKEDDEE) are compositionally biased toward acidic residues. Residues 220-229 (STSSSEGNQK) are compositionally biased toward polar residues.

The protein belongs to the Mediator complex subunit 7 family. As to quaternary structure, component of the Mediator complex.

It is found in the nucleus. Functionally, component of the Mediator complex, a coactivator involved in the regulated transcription of nearly all RNA polymerase II-dependent genes. Mediator functions as a bridge to convey information from gene-specific regulatory proteins to the basal RNA polymerase II transcription machinery. Mediator is recruited to promoters by direct interactions with regulatory proteins and serves as a scaffold for the assembly of a functional preinitiation complex with RNA polymerase II and the general transcription factors. This chain is Mediator of RNA polymerase II transcription subunit 7 (let-49), found in Caenorhabditis briggsae.